The chain runs to 303 residues: tRNA pseudouridine synthase B (303 aa).

Asp47 acts as the Nucleophile in catalysis.

It belongs to the pseudouridine synthase TruB family. Type 1 subfamily.

The catalysed reaction is uridine(55) in tRNA = pseudouridine(55) in tRNA. Functionally, responsible for synthesis of pseudouridine from uracil-55 in the psi GC loop of transfer RNAs. The protein is tRNA pseudouridine synthase B of Roseobacter denitrificans (strain ATCC 33942 / OCh 114) (Erythrobacter sp. (strain OCh 114)).